The chain runs to 86 residues: UPF0367 protein NATL1_01981 (86 aa).

The protein belongs to the UPF0367 family.

This chain is UPF0367 protein NATL1_01981, found in Prochlorococcus marinus (strain NATL1A).